A 151-amino-acid polypeptide reads, in one-letter code: MAANSQGNFDGKFEALDLAELTKKQPWWRKLFGQESGPSAEKYSVATQLVIGGVTGWCTGFVFQKVGKLAATAVGGGFFLLQLANHTGYIKVDWQRVEKDMKKAKEQLKIRKNKQIPTEVKSKAEEVVSFVKKNVLVTGGFFGGFLLGMAS.

Topologically, residues 1–42 (MAANSQGNFDGKFEALDLAELTKKQPWWRKLFGQESGPSAEK) are cytoplasmic. The helical transmembrane segment at 43–63 (YSVATQLVIGGVTGWCTGFVF) threads the bilayer. The Mitochondrial intermembrane segment spans residues 64-69 (QKVGKL). Residues 70–90 (AATAVGGGFFLLQLANHTGYI) traverse the membrane as a helical segment. Topologically, residues 91–126 (KVDWQRVEKDMKKAKEQLKIRKNKQIPTEVKSKAEE) are cytoplasmic. The chain crosses the membrane as a helical span at residues 127–147 (VVSFVKKNVLVTGGFFGGFLL). Over 148 to 151 (GMAS) the chain is Mitochondrial intermembrane.

Belongs to the FUN14 family. In terms of tissue distribution, highly expressed in platelet (at protein level). Expressed in liver, brain, heart and muscle.

The protein resides in the mitochondrion outer membrane. Its subcellular location is the nucleus. In terms of biological role, binds directly and specifically 1,2-Diacyl-sn-glycero-3-phospho-(1'-myo-inositol-3',4',5'-bisphosphate) (PIP3) leading to the recruitment of PIP3 to mitochondria and may play a role in the regulation of the platelet activation via AKT/GSK3B/cGMP signaling pathways. May act as transcription factor that regulates SREBP1 (isoform SREBP-1C) expression in order to modulate triglyceride (TG) homeostasis in hepatocytes. The polypeptide is FUN14 domain-containing protein 2 (Mus musculus (Mouse)).